The primary structure comprises 1032 residues: Leucine-rich repeat and coiled-coil domain-containing protein 1 (1032 aa).

LRR repeat units lie at residues 44 to 65 (TLHAVNLHCNNISKIEAIDHIW), 66 to 87 (NLQHLDLSSNQISRIEGLNTLT), 88 to 109 (KLCTLNLSCNLITKVEGLEELI), 110 to 131 (NLTRLNVSYNHIDDLSGLIPLH), and 136 to 157 (KLRYIDLHSNRIDSIHHLLQCM). The 44-residue stretch at 175-218 (NPVCRLPGYRAVILQTLPQLRILDCKNIFGEPVNLTEINSSQLQ) folds into the LRRCT domain. Positions 316-345 (DNVLEKDPRPKRDTDITSESDYGNRKECNR) are disordered. Over residues 318-330 (VLEKDPRPKRDTD) the composition is skewed to basic and acidic residues. Positions 421-647 (NTYQSLVEQL…DLENEFRIAL (227 aa)) form a coiled coil.

It belongs to the LRRCC1 family.

The protein localises to the cytoplasm. The protein resides in the cytoskeleton. It localises to the microtubule organizing center. It is found in the centrosome. Its subcellular location is the centriole. In terms of biological role, required for the organization of the mitotic spindle. Maintains the structural integrity of centrosomes during mitosis. The sequence is that of Leucine-rich repeat and coiled-coil domain-containing protein 1 (LRRCC1) from Homo sapiens (Human).